Here is a 172-residue protein sequence, read N- to C-terminus: Large ribosomal subunit protein uL10 (172 aa).

The protein belongs to the universal ribosomal protein uL10 family. As to quaternary structure, part of the ribosomal stalk of the 50S ribosomal subunit. The N-terminus interacts with L11 and the large rRNA to form the base of the stalk. The C-terminus forms an elongated spine to which L12 dimers bind in a sequential fashion forming a multimeric L10(L12)X complex.

Forms part of the ribosomal stalk, playing a central role in the interaction of the ribosome with GTP-bound translation factors. The chain is Large ribosomal subunit protein uL10 from Nitrobacter hamburgensis (strain DSM 10229 / NCIMB 13809 / X14).